Consider the following 392-residue polypeptide: 8-amino-7-oxononanoate synthase (392 aa).

Residue R26 coordinates substrate. 112–113 is a binding site for pyridoxal 5'-phosphate; it reads GF. H137 lines the substrate pocket. S187, H215, and T241 together coordinate pyridoxal 5'-phosphate. An N6-(pyridoxal phosphate)lysine modification is found at K244. T357 lines the substrate pocket.

The protein belongs to the class-II pyridoxal-phosphate-dependent aminotransferase family. BioF subfamily. Homodimer. Requires pyridoxal 5'-phosphate as cofactor.

It catalyses the reaction 6-carboxyhexanoyl-[ACP] + L-alanine + H(+) = (8S)-8-amino-7-oxononanoate + holo-[ACP] + CO2. The protein operates within cofactor biosynthesis; biotin biosynthesis. Its function is as follows. Catalyzes the decarboxylative condensation of pimeloyl-[acyl-carrier protein] and L-alanine to produce 8-amino-7-oxononanoate (AON), [acyl-carrier protein], and carbon dioxide. The sequence is that of 8-amino-7-oxononanoate synthase from Photobacterium profundum (strain SS9).